The chain runs to 1516 residues: Mediator of RNA polymerase II transcription subunit 14 (1516 aa).

Disordered regions lie at residues 22–98 (LSSQ…EVPA) and 1434–1516 (MHRQ…YPPQ). A compositionally biased stretch (low complexity) spans 34–47 (SPAAPISPAPSGSA). The span at 72 to 83 (SEVDVKSIHSSD) shows a compositional bias: basic and acidic residues. A compositionally biased stretch (low complexity) spans 1463-1473 (SHQQHMMNPGS). The segment covering 1474–1483 (VGPGSVGGPG) has biased composition (gly residues). A compositionally biased stretch (low complexity) spans 1502-1516 (QSYHHPLHHQQYPPQ).

It belongs to the Mediator complex subunit 14 family. As to quaternary structure, component of the Mediator complex.

It is found in the nucleus. Functionally, component of the Mediator complex, a coactivator involved in the regulated transcription of nearly all RNA polymerase II-dependent genes. Mediator functions as a bridge to convey information from gene-specific regulatory proteins to the basal RNA polymerase II transcription machinery. Mediator is recruited to promoters by direct interactions with regulatory proteins and serves as a scaffold for the assembly of a functional preinitiation complex with RNA polymerase II and the general transcription factors. Required for transcription in the embryo and for phosphorylation of the RNA polymerase II C-terminal domain repeat. The polypeptide is Mediator of RNA polymerase II transcription subunit 14 (rgr-1) (Caenorhabditis elegans).